The chain runs to 460 residues: ATP synthase subunit beta (460 aa).

An ATP-binding site is contributed by glycine 150–threonine 157.

It belongs to the ATPase alpha/beta chains family. In terms of assembly, F-type ATPases have 2 components, CF(1) - the catalytic core - and CF(0) - the membrane proton channel. CF(1) has five subunits: alpha(3), beta(3), gamma(1), delta(1), epsilon(1). CF(0) has three main subunits: a(1), b(2) and c(9-12). The alpha and beta chains form an alternating ring which encloses part of the gamma chain. CF(1) is attached to CF(0) by a central stalk formed by the gamma and epsilon chains, while a peripheral stalk is formed by the delta and b chains.

It is found in the cell inner membrane. It carries out the reaction ATP + H2O + 4 H(+)(in) = ADP + phosphate + 5 H(+)(out). Its function is as follows. Produces ATP from ADP in the presence of a proton gradient across the membrane. The catalytic sites are hosted primarily by the beta subunits. The chain is ATP synthase subunit beta from Serratia proteamaculans (strain 568).